Here is a 550-residue protein sequence, read N- to C-terminus: Membrane protein insertase YidC (550 aa).

Residues 3–23 (IKRTVLWVIFFMSAVMLFDNW) traverse the membrane as a helical segment. Residues 34–73 (FPSATQTKTAAPAAPGSSTTASQPTDLPQTTAAAPGSTTP) are disordered. The span at 35 to 73 (PSATQTKTAAPAAPGSSTTASQPTDLPQTTAAAPGSTTP) shows a compositional bias: low complexity. The next 4 membrane-spanning stretches (helical) occupy residues 363–383 (WGWA…PLSA), 429–449 (FGGC…YWVL), 472–492 (PYFI…KLNP), and 503–523 (MMFM…GLVL).

It belongs to the OXA1/ALB3/YidC family. Type 1 subfamily. Interacts with the Sec translocase complex via SecD. Specifically interacts with transmembrane segments of nascent integral membrane proteins during membrane integration.

Its subcellular location is the cell inner membrane. Functionally, required for the insertion and/or proper folding and/or complex formation of integral membrane proteins into the membrane. Involved in integration of membrane proteins that insert both dependently and independently of the Sec translocase complex, as well as at least some lipoproteins. Aids folding of multispanning membrane proteins. The sequence is that of Membrane protein insertase YidC from Paraburkholderia phymatum (strain DSM 17167 / CIP 108236 / LMG 21445 / STM815) (Burkholderia phymatum).